The following is a 349-amino-acid chain: UPF0283 membrane protein Ent638_2153 (349 aa).

3 consecutive transmembrane segments (helical) span residues 70 to 90 (MVTA…VQWT), 99 to 119 (WVAL…VGSV), and 213 to 233 (ESTL…FIAW).

The protein belongs to the UPF0283 family.

The protein localises to the cell inner membrane. The protein is UPF0283 membrane protein Ent638_2153 of Enterobacter sp. (strain 638).